The following is a 151-amino-acid chain: Guanylate kinase homolog (151 aa).

Positions 1-141 (MEREGVDYHY…AYSKLIQILQ (141 aa)) constitute a Guanylate kinase-like domain.

This sequence belongs to the guanylate kinase family.

This Vaccinia virus (strain Copenhagen) (VACV) protein is Guanylate kinase homolog.